The sequence spans 497 residues: Glycerol kinase (497 aa).

Residue Thr13 coordinates ADP. 3 residues coordinate ATP: Thr13, Thr14, and Ser15. Thr13 contributes to the sn-glycerol 3-phosphate binding site. Arg17 provides a ligand contact to ADP. Sn-glycerol 3-phosphate is bound by residues Arg83, Glu84, and Tyr135. Glycerol-binding residues include Arg83, Glu84, and Tyr135. Phosphohistidine; by HPr is present on His231. Asp245 is a binding site for sn-glycerol 3-phosphate. 2 residues coordinate glycerol: Asp245 and Gln246. Positions 267 and 310 each coordinate ADP. ATP-binding residues include Thr267, Gly310, Gln314, and Gly411. Residues Gly411 and Asn415 each contribute to the ADP site.

The protein belongs to the FGGY kinase family. As to quaternary structure, homotetramer and homodimer (in equilibrium). Post-translationally, the phosphoenolpyruvate-dependent sugar phosphotransferase system (PTS), including enzyme I, and histidine-containing protein (HPr) are required for the phosphorylation, which leads to the activation of the enzyme.

The enzyme catalyses glycerol + ATP = sn-glycerol 3-phosphate + ADP + H(+). The protein operates within polyol metabolism; glycerol degradation via glycerol kinase pathway; sn-glycerol 3-phosphate from glycerol: step 1/1. Activated by phosphorylation and inhibited by fructose 1,6-bisphosphate (FBP). In terms of biological role, key enzyme in the regulation of glycerol uptake and metabolism. Catalyzes the phosphorylation of glycerol to yield sn-glycerol 3-phosphate. The sequence is that of Glycerol kinase from Listeria monocytogenes serovar 1/2a (strain ATCC BAA-679 / EGD-e).